The sequence spans 186 residues: piRNA-mediated silencing protein C19orf84 (186 aa).

2 disordered regions span residues 1–42 and 89–186; these read MEQP…NSTD and SQAG…ETEY. The span at 13-22 shows a compositional bias: polar residues; the sequence is NNLSLPSSGT. Positions 24–36 are enriched in pro residues; sequence PWPPAPLPAPPPL. A compositionally biased stretch (basic residues) spans 114–126; it reads RPGWGRGLHRRGL. Residues 145-157 show a composition bias toward pro residues; sequence RTPPMTLPSPPTL.

As to quaternary structure, interacts with SPOCD1.

Its subcellular location is the nucleus. The protein resides in the nucleoplasm. Protein adapter involved in piRNA-directed transposon methylation by connecting PIWIL4-piRNA and DNA methylation machineries. The PIWIL4-piRNA pathway plays a central role during spermatogenesis by directing transposon DNA methylation and silencing, thereby preventing their mobilization, which is essential for the germline integrity. This is piRNA-mediated silencing protein C19orf84 from Homo sapiens (Human).